The chain runs to 215 residues: Peroxiredoxin 1 (215 aa).

Residues 2–158 form the Thioredoxin domain; sequence VKLYSKFPDV…LLRITKAAIV (157 aa). Cysteine 46 serves as the catalytic Cysteine sulfenic acid (-SOH) intermediate. Arginine 121 contributes to the substrate binding site.

This sequence belongs to the peroxiredoxin family. Prx6 subfamily. Homodecamer. Pentamer of dimers that assemble into a ring structure.

Its subcellular location is the cytoplasm. The catalysed reaction is a hydroperoxide + [thioredoxin]-dithiol = an alcohol + [thioredoxin]-disulfide + H2O. Functionally, thiol-specific peroxidase that catalyzes the reduction of hydrogen peroxide and organic hydroperoxides to water and alcohols, respectively. Plays a role in cell protection against oxidative stress by detoxifying peroxides. This chain is Peroxiredoxin 1, found in Sulfurisphaera tokodaii (strain DSM 16993 / JCM 10545 / NBRC 100140 / 7) (Sulfolobus tokodaii).